The primary structure comprises 211 residues: Large ribosomal subunit protein uL3 (211 aa).

The residue at position 150 (Gln150) is an N5-methylglutamine.

Belongs to the universal ribosomal protein uL3 family. Part of the 50S ribosomal subunit. Forms a cluster with proteins L14 and L19. Post-translationally, methylated by PrmB.

Functionally, one of the primary rRNA binding proteins, it binds directly near the 3'-end of the 23S rRNA, where it nucleates assembly of the 50S subunit. This chain is Large ribosomal subunit protein uL3, found in Pseudomonas syringae pv. tomato (strain ATCC BAA-871 / DC3000).